We begin with the raw amino-acid sequence, 32 residues long: Calcitonin (32 aa).

A disulfide bridge connects residues Cys1 and Cys7. Pro32 is subject to Proline amide.

Belongs to the calcitonin family.

Its subcellular location is the secreted. Functionally, causes a rapid but short-lived drop in the level of calcium and phosphate in blood by promoting the incorporation of those ions in the bones. This Aquarana catesbeiana (American bullfrog) protein is Calcitonin.